Reading from the N-terminus, the 98-residue chain is Ribonuclease kappa (98 aa).

The next 2 helical transmembrane spans lie at 13 to 33 (ACGIVLSAWGVIMLIMLGIFF) and 65 to 85 (VSYNCFIAASLYLLLGGFSFC).

The protein belongs to the RNase K family. As to quaternary structure, interacts with the proton translocation complex V0 of the V-ATPase. Interacts with ATP6AP1. In terms of tissue distribution, expressed in brain (at protein level).

The protein localises to the endomembrane system. Its subcellular location is the cytoplasmic vesicle. It is found in the clathrin-coated vesicle membrane. In terms of biological role, endoribonuclease which preferentially cleaves ApU and ApG phosphodiester bonds. Hydrolyzes UpU bonds at a lower rate. Regulates the activity of vacuolar (H+)-ATPase (V-ATPase) which is responsible for acidifying and maintaining the pH of intracellular compartments. Required at an early stage of receptor-mediated endocytosis. The polypeptide is Ribonuclease kappa (RNASEK) (Bos taurus (Bovine)).